Reading from the N-terminus, the 326-residue chain is Acetyl-coenzyme A carboxylase carboxyl transferase subunit alpha (326 aa).

The region spanning 44 to 298 (KLETRAMQLR…KQALLDNLDE (255 aa)) is the CoA carboxyltransferase C-terminal domain.

This sequence belongs to the AccA family. Acetyl-CoA carboxylase is a heterohexamer composed of biotin carboxyl carrier protein (AccB), biotin carboxylase (AccC) and two subunits each of ACCase subunit alpha (AccA) and ACCase subunit beta (AccD).

Its subcellular location is the cytoplasm. The enzyme catalyses N(6)-carboxybiotinyl-L-lysyl-[protein] + acetyl-CoA = N(6)-biotinyl-L-lysyl-[protein] + malonyl-CoA. Its pathway is lipid metabolism; malonyl-CoA biosynthesis; malonyl-CoA from acetyl-CoA: step 1/1. In terms of biological role, component of the acetyl coenzyme A carboxylase (ACC) complex. First, biotin carboxylase catalyzes the carboxylation of biotin on its carrier protein (BCCP) and then the CO(2) group is transferred by the carboxyltransferase to acetyl-CoA to form malonyl-CoA. This Trichormus variabilis (strain ATCC 29413 / PCC 7937) (Anabaena variabilis) protein is Acetyl-coenzyme A carboxylase carboxyl transferase subunit alpha.